The following is a 430-amino-acid chain: Serine--tRNA ligase (430 aa).

Position 237–239 (T237–E239) interacts with L-serine. An ATP-binding site is contributed by R268 to E270. Residue E291 coordinates L-serine. ATP is bound at residue E355–S358. L-serine is bound at residue S391.

It belongs to the class-II aminoacyl-tRNA synthetase family. Type-1 seryl-tRNA synthetase subfamily. Homodimer. The tRNA molecule binds across the dimer.

The protein localises to the cytoplasm. It catalyses the reaction tRNA(Ser) + L-serine + ATP = L-seryl-tRNA(Ser) + AMP + diphosphate + H(+). The catalysed reaction is tRNA(Sec) + L-serine + ATP = L-seryl-tRNA(Sec) + AMP + diphosphate + H(+). It participates in aminoacyl-tRNA biosynthesis; selenocysteinyl-tRNA(Sec) biosynthesis; L-seryl-tRNA(Sec) from L-serine and tRNA(Sec): step 1/1. Catalyzes the attachment of serine to tRNA(Ser). Is also able to aminoacylate tRNA(Sec) with serine, to form the misacylated tRNA L-seryl-tRNA(Sec), which will be further converted into selenocysteinyl-tRNA(Sec). The chain is Serine--tRNA ligase from Escherichia fergusonii (strain ATCC 35469 / DSM 13698 / CCUG 18766 / IAM 14443 / JCM 21226 / LMG 7866 / NBRC 102419 / NCTC 12128 / CDC 0568-73).